Reading from the N-terminus, the 353-residue chain is rRNA methyltransferase 1, mitochondrial (353 aa).

A mitochondrion-targeting transit peptide spans 1–20 (MALLSTVRGATWGRLVTRHF). The disordered stretch occupies residues 311-353 (PTEGERRQLLQDPQEPSARSEGLSMAQHPGLSSGPEKERQNEG).

It belongs to the class IV-like SAM-binding methyltransferase superfamily. RNA methyltransferase TrmH family.

The protein localises to the mitochondrion matrix. It catalyses the reaction guanosine(1145) in 16S rRNA + S-adenosyl-L-methionine = 2'-O-methylguanosine(1145) in 16S rRNA + S-adenosyl-L-homocysteine + H(+). In terms of biological role, S-adenosyl-L-methionine-dependent 2'-O-ribose methyltransferase that catalyzes the formation of 2'-O-methylguanosine at position 1145 (Gm1145) in the 16S mitochondrial large subunit ribosomal RNA (mtLSU rRNA), a universally conserved modification in the peptidyl transferase domain of the mtLSU rRNA. The sequence is that of rRNA methyltransferase 1, mitochondrial from Homo sapiens (Human).